We begin with the raw amino-acid sequence, 1076 residues long: Bifunctional glutamine synthetase adenylyltransferase/adenylyl-removing enzyme (1076 aa).

The interval methionine 1–methionine 521 is adenylyl removase. Positions valine 524–arginine 1076 are adenylyl transferase. Residues threonine 1042–proline 1056 show a composition bias toward low complexity. Residues threonine 1042 to arginine 1076 are disordered.

This sequence belongs to the GlnE family. Requires Mg(2+) as cofactor.

The catalysed reaction is [glutamine synthetase]-O(4)-(5'-adenylyl)-L-tyrosine + phosphate = [glutamine synthetase]-L-tyrosine + ADP. It carries out the reaction [glutamine synthetase]-L-tyrosine + ATP = [glutamine synthetase]-O(4)-(5'-adenylyl)-L-tyrosine + diphosphate. In terms of biological role, involved in the regulation of glutamine synthetase GlnA, a key enzyme in the process to assimilate ammonia. When cellular nitrogen levels are high, the C-terminal adenylyl transferase (AT) inactivates GlnA by covalent transfer of an adenylyl group from ATP to specific tyrosine residue of GlnA, thus reducing its activity. Conversely, when nitrogen levels are low, the N-terminal adenylyl removase (AR) activates GlnA by removing the adenylyl group by phosphorolysis, increasing its activity. The regulatory region of GlnE binds the signal transduction protein PII (GlnB) which indicates the nitrogen status of the cell. This is Bifunctional glutamine synthetase adenylyltransferase/adenylyl-removing enzyme from Bifidobacterium longum (strain NCC 2705).